Consider the following 588-residue polypeptide: Phosphomethylpyrimidine synthase (588 aa).

Substrate-binding positions include Asn-212, Met-241, Tyr-270, His-306, 326-328, 367-370, and Glu-406; these read SRG and DGLR. His-410 contacts Zn(2+). Residue Tyr-433 participates in substrate binding. His-474 serves as a coordination point for Zn(2+). The [4Fe-4S] cluster site is built by Cys-554, Cys-557, and Cys-562.

Belongs to the ThiC family. In terms of assembly, homodimer. The cofactor is [4Fe-4S] cluster.

The enzyme catalyses 5-amino-1-(5-phospho-beta-D-ribosyl)imidazole + S-adenosyl-L-methionine = 4-amino-2-methyl-5-(phosphooxymethyl)pyrimidine + CO + 5'-deoxyadenosine + formate + L-methionine + 3 H(+). It functions in the pathway cofactor biosynthesis; thiamine diphosphate biosynthesis. Its function is as follows. Catalyzes the synthesis of the hydroxymethylpyrimidine phosphate (HMP-P) moiety of thiamine from aminoimidazole ribotide (AIR) in a radical S-adenosyl-L-methionine (SAM)-dependent reaction. The protein is Phosphomethylpyrimidine synthase of Bartonella quintana (strain Toulouse) (Rochalimaea quintana).